The sequence spans 348 residues: Putative methylesterase 14, chloroplastic (348 aa).

2 disordered regions span residues 1–29 (MGNKIISMMKKDSKDGGGGGSKSKRMNRS) and 60–80 (GSMSRRVGSTSTRKRTLSDPF). The N-terminal 76 residues, 1 to 76 (MGNKIISMMK…GSTSTRKRTL (76 aa)), are a transit peptide targeting the chloroplast. The residue at position 77 (Ser77) is a Phosphoserine. Ser172 acts as the Acyl-ester intermediate in catalysis. Catalysis depends on charge relay system residues Asp299 and His327.

It belongs to the AB hydrolase superfamily. Methylesterase family.

It localises to the plastid. The protein localises to the chloroplast. Its function is as follows. Putative methylesterase. The chain is Putative methylesterase 14, chloroplastic from Arabidopsis thaliana (Mouse-ear cress).